We begin with the raw amino-acid sequence, 390 residues long: Transforming growth factor beta-1 proprotein (390 aa).

An N-terminal signal peptide occupies residues 1–29; the sequence is MPPSGLRLLPLLLPLLRLLVLTPGRPAAG. A straightjacket domain region spans residues 30-74; sequence LSTCKTIDMELVKRKRIEAIRGQILSKLRLSSPPSQGEVPPVPLP. The segment at 75-271 is arm domain; the sequence is EAVLALYNST…ATPLERAQHL (197 aa). Asn82, Asn136, and Asn176 each carry an N-linked (GlcNAc...) asparagine glycan. The bowtie tail stretch occupies residues 226–252; the sequence is DSKDNTLQVDINGFSSSRRGDLATIHG. A Cell attachment site motif is present at residues 244–246; sequence RGD. Cystine bridges form between Cys285/Cys294, Cys293/Cys356, Cys322/Cys387, and Cys326/Cys389.

The protein belongs to the TGF-beta family. As to quaternary structure, homodimer; disulfide-linked. Interacts with the serine proteases, HTRA1 and HTRA3: the interaction with either inhibits TGFB1-mediated signaling and the HTRA protease activity is required for this inhibition. May interact with THSD4; this interaction may lead to sequestration by FBN1 microfibril assembly and attenuation of TGFB signaling. Interacts with CD109, DPT and ASPN. Interacts with EFEMP2. Interacts with TSKU; the interaction contributes to regulation of the hair cycle. Interacts with TGFBR3. In terms of assembly, homodimer; disulfide-linked. Interacts with transforming growth factor beta-1 (TGF-beta-1) chain; interaction is non-covalent and maintains TGF-beta-1 in a latent state; each latency-associated peptide (LAP) monomer interacts with TGF-beta-1 in the other monomer. Interacts with LTBP1; leading to regulation of TGF-beta-1 activation. Interacts with LRRC32/GARP; leading to regulation of TGF-beta-1 activation on the surface of activated regulatory T-cells (Tregs). Interacts with LRRC33/NRROS; leading to regulation of TGF-beta-1 activation in macrophages and microglia. Interacts (via cell attachment site) with integrins ITGAV and ITGB6 (ITGAV:ITGB6), leading to release of the active TGF-beta-1. Interacts with NREP; the interaction results in a decrease in TGFB1 autoinduction. Interacts with HSP90AB1; inhibits latent TGFB1 activation. Homodimer; disulfide-linked. Interacts with TGF-beta receptors (TGFBR1 and TGFBR2), leading to signal transduction. In terms of processing, transforming growth factor beta-1 proprotein: The precursor proprotein is cleaved in the Golgi apparatus by FURIN to form Transforming growth factor beta-1 (TGF-beta-1) and Latency-associated peptide (LAP) chains, which remain non-covalently linked, rendering TGF-beta-1 inactive. N-glycosylated. Deglycosylation leads to activation of Transforming growth factor beta-1 (TGF-beta-1); mechanisms triggering deglycosylation-driven activation of TGF-beta-1 are however unclear.

It is found in the secreted. The protein resides in the extracellular space. It localises to the extracellular matrix. Its function is as follows. Transforming growth factor beta-1 proprotein: Precursor of the Latency-associated peptide (LAP) and Transforming growth factor beta-1 (TGF-beta-1) chains, which constitute the regulatory and active subunit of TGF-beta-1, respectively. Functionally, required to maintain the Transforming growth factor beta-1 (TGF-beta-1) chain in a latent state during storage in extracellular matrix. Associates non-covalently with TGF-beta-1 and regulates its activation via interaction with 'milieu molecules', such as LTBP1, LRRC32/GARP and LRRC33/NRROS, that control activation of TGF-beta-1. Interaction with LRRC33/NRROS regulates activation of TGF-beta-1 in macrophages and microglia. Interaction with LRRC32/GARP controls activation of TGF-beta-1 on the surface of activated regulatory T-cells (Tregs). Interaction with integrins (ITGAV:ITGB6 or ITGAV:ITGB8) results in distortion of the Latency-associated peptide chain and subsequent release of the active TGF-beta-1. Multifunctional protein that regulates the growth and differentiation of various cell types and is involved in various processes, such as normal development, immune function, microglia function and responses to neurodegeneration. Activation into mature form follows different steps: following cleavage of the proprotein in the Golgi apparatus, Latency-associated peptide (LAP) and Transforming growth factor beta-1 (TGF-beta-1) chains remain non-covalently linked rendering TGF-beta-1 inactive during storage in extracellular matrix. At the same time, LAP chain interacts with 'milieu molecules', such as LTBP1, LRRC32/GARP and LRRC33/NRROS that control activation of TGF-beta-1 and maintain it in a latent state during storage in extracellular milieus. TGF-beta-1 is released from LAP by integrins (ITGAV:ITGB6 or ITGAV:ITGB8): integrin-binding to LAP stabilizes an alternative conformation of the LAP bowtie tail and results in distortion of the LAP chain and subsequent release of the active TGF-beta-1. Once activated following release of LAP, TGF-beta-1 acts by binding to TGF-beta receptors (TGFBR1 and TGFBR2), which transduce signal. While expressed by many cells types, TGF-beta-1 only has a very localized range of action within cell environment thanks to fine regulation of its activation by Latency-associated peptide chain (LAP) and 'milieu molecules'. Plays an important role in bone remodeling: acts as a potent stimulator of osteoblastic bone formation, causing chemotaxis, proliferation and differentiation in committed osteoblasts. Can promote either T-helper 17 cells (Th17) or regulatory T-cells (Treg) lineage differentiation in a concentration-dependent manner. At high concentrations, leads to FOXP3-mediated suppression of RORC and down-regulation of IL-17 expression, favoring Treg cell development. At low concentrations in concert with IL-6 and IL-21, leads to expression of the IL-17 and IL-23 receptors, favoring differentiation to Th17 cells. Stimulates sustained production of collagen through the activation of CREB3L1 by regulated intramembrane proteolysis (RIP). Mediates SMAD2/3 activation by inducing its phosphorylation and subsequent translocation to the nucleus. Positively regulates odontoblastic differentiation in dental papilla cells, via promotion of IPO7-mediated translocation of phosphorylated SMAD2 to the nucleus and subsequent transcription of target genes. Can induce epithelial-to-mesenchymal transition (EMT) and cell migration in various cell types. This Canis lupus familiaris (Dog) protein is Transforming growth factor beta-1 proprotein (TGFB1).